Reading from the N-terminus, the 490-residue chain is Cytochrome P450 71A25 (490 aa).

A helical transmembrane segment spans residues 1 to 21 (MMMMIILLWSIIFMTILFLKK). Cys-431 serves as a coordination point for heme.

It belongs to the cytochrome P450 family. Heme serves as cofactor.

The protein localises to the membrane. The protein is Cytochrome P450 71A25 (CYP71A25) of Arabidopsis thaliana (Mouse-ear cress).